The primary structure comprises 82 residues: Small ribosomal subunit protein bS16 (82 aa).

This sequence belongs to the bacterial ribosomal protein bS16 family.

The polypeptide is Small ribosomal subunit protein bS16 (Haemophilus ducreyi (strain 35000HP / ATCC 700724)).